The sequence spans 349 residues: D-arabinose 1-dehydrogenase (NADP(+)) (349 aa).

Positions 46, 70, 99, 102, 105, 113, and 155 each coordinate Zn(2+).

The protein belongs to the zinc-containing alcohol dehydrogenase family. Homotetramer. Dimer of dimers. The cofactor is Zn(2+).

It carries out the reaction D-arabinose + NADP(+) = D-arabinono-1,4-lactone + NADPH + H(+). Its function is as follows. Participates in a pentose oxidation pathway that converts D-arabinose to 2-oxoglutarate. Catalyzes the NADP-dependent conversion of D-arabinose to D-arabinono-1,4-lactone. In vitro, can also use L-fucose, L-galactose and D-ribose. Shows highest activity with L-fucose, in combinaison with NAD, and lower activity toward L-galactose and D-ribose. When acting on its physiological substrate, D-arabinose, shows a clear preference for NADP over NAD. The sequence is that of D-arabinose 1-dehydrogenase (NADP(+)) from Saccharolobus solfataricus (strain ATCC 35092 / DSM 1617 / JCM 11322 / P2) (Sulfolobus solfataricus).